Consider the following 1140-residue polypeptide: MNQLNQKTKLDKHLSSDNRAKIVADYFKTNGLVKHQIETFNHFISKGLKTIINNESSIKYQSHDNYSLKFTNIYVEYPSIIDDDRTIRDLYPQEARNKDLSYTGNVCVNVIEMVENKEGKPPQISEQYRVPIAKIPIMLGSDVCHLSKYTPLENEQINGHSQADQGGYFIINGKERVLISQVRKAYNKPVCFVKSTSQKEDVLICEMRSMCEETFHSTSVQVKMIKNKIMVSLKLKRKLIDIPVGIVFKCLGYNPDQMGSKFRSLFNLPPEYEKYIDAIKNDCLEEFAYGIAVSAADGDNSDSGGESGGEEEADQEEHIVKVFRNMSTSVDKDGGMAATGITIEDVQKSLDMDLFPHLGITSTRKQRVDLLAFMVKKYLLTLTRKIPVDNRDDYNHKRVETAGELYSFLFRLLYKKFQKTCITQIRNRKPDISNFLRTSGITTGILYSFSSGYWGVQRNTYIRTGVSQVVNPKVSLLANYSSLRRVVIPESKDGKEAKTSEIRQIHPSSSFLVCPVETPEGKGVGTVLNMAVFCQVTTGISTCEIMDQIDSFGVDLKCHCTIKDPNNCLLLLINGSPYGNGHANVIHRLNFLNDTNISIVVNRALGVIEIFSDAGRFIRPIFDLDKICNFEGEIVPSFKWFLDNQLIRYIDINEAAANSIAIELRDLSTNPNTRYNLMELDPCGMFGIVAGIIPFPDRTQSARNCFYSSMVKQAIGFVPCHNLKTETVSHTLNYPQKPLVTTSFAEYNQLNEYPNGINAIVAIACYTGYNQEDSIILNKSSIDRGLFGTITYNTFTAQEKKNGIIEERIEIPSNAIKIRDCNYGLVGPDGIVRLRQRVKKGDVLICKVTIKNKNQDEKLVDSSVIVQHGEEGYVDRIVDNVIDGCRIVKVVIGQMRTPEIGDKFCSGMAQKGTCGMIFPQEDMPFTASGMTPDIIINPNCIPSRMTINQIISTVMGKLYTVNPNPRFRNGNSFQENSNTILKELCHHLKLNGFDPSGSEVMYSGFTGERIQSTIFMGPTYYHRLKHMVKDKMHARSHGQVTTLHRQPNCGRSQGGGLRFGEMEKDCILVHGATQFLNERMFLNSDPFQIDVCKDCGMMSSTSKKCHHCGSINVKRCNIPYSCKNLLQELNGMGIKTKIDL.

D773 contributes to the Mg(2+) binding site. Positions 1092, 1095, 1105, and 1108 each coordinate Zn(2+). The C4-type zinc finger occupies 1092–1108 (CKDCGMMSSTSKKCHHC).

The protein belongs to the RNA polymerase beta chain family.

The enzyme catalyses RNA(n) + a ribonucleoside 5'-triphosphate = RNA(n+1) + diphosphate. Functionally, component of the DNA-dependent RNA polymerase that catalyzes the transcription of DNA into RNA using the four ribonucleoside triphosphates as substrates. Second largest component of RNA polymerase II which synthesizes mRNA precursors and many functional non-coding RNAs. Proposed to contribute to the polymerase catalytic activity and forms the polymerase active center together with the largest subunit. This chain is Probable DNA-directed RNA polymerase II subunit RPB2 homolog, found in Invertebrate iridescent virus 3 (IIV-3).